A 521-amino-acid polypeptide reads, in one-letter code: Protein nucleotidyltransferase YdiU (521 aa).

8 residues coordinate ATP: Gly-109, Gly-111, Arg-112, Lys-131, Asp-143, Gly-144, Arg-194, and Arg-201. Catalysis depends on Asp-270, which acts as the Proton acceptor. Positions 271 and 280 each coordinate Mg(2+). Asp-280 lines the ATP pocket.

This sequence belongs to the SELO family. It depends on Mg(2+) as a cofactor. Requires Mn(2+) as cofactor.

It catalyses the reaction L-seryl-[protein] + ATP = 3-O-(5'-adenylyl)-L-seryl-[protein] + diphosphate. The enzyme catalyses L-threonyl-[protein] + ATP = 3-O-(5'-adenylyl)-L-threonyl-[protein] + diphosphate. It carries out the reaction L-tyrosyl-[protein] + ATP = O-(5'-adenylyl)-L-tyrosyl-[protein] + diphosphate. The catalysed reaction is L-histidyl-[protein] + UTP = N(tele)-(5'-uridylyl)-L-histidyl-[protein] + diphosphate. It catalyses the reaction L-seryl-[protein] + UTP = O-(5'-uridylyl)-L-seryl-[protein] + diphosphate. The enzyme catalyses L-tyrosyl-[protein] + UTP = O-(5'-uridylyl)-L-tyrosyl-[protein] + diphosphate. Functionally, nucleotidyltransferase involved in the post-translational modification of proteins. It can catalyze the addition of adenosine monophosphate (AMP) or uridine monophosphate (UMP) to a protein, resulting in modifications known as AMPylation and UMPylation. This is Protein nucleotidyltransferase YdiU from Burkholderia pseudomallei (strain 1106a).